The chain runs to 271 residues: 4,5-DOPA dioxygenase extradiol (271 aa).

4 residues coordinate Zn(2+): His22, His57, His177, and His234.

The protein belongs to the DODA-type extradiol aromatic ring-opening dioxygenase family. In terms of assembly, monomer. Requires Zn(2+) as cofactor.

The protein resides in the cytoplasm. The catalysed reaction is L-dopa + O2 = 4-(L-alanin-3-yl)-2-hydroxy-cis,cis-muconate 6-semialdehyde + H(+). In terms of biological role, in vitro, opens the cyclic ring of dihydroxy-phenylalanine (DOPA) between carbons 4 and 5, thus producing an unstable seco-DOPA that rearranges nonenzymatically to betalamic acid. The physiological substrate is unknown. This chain is 4,5-DOPA dioxygenase extradiol (ygiD), found in Escherichia coli (strain K12).